We begin with the raw amino-acid sequence, 153 residues long: Aspartate carbamoyltransferase regulatory chain (153 aa).

Cysteine 109, cysteine 114, cysteine 138, and cysteine 141 together coordinate Zn(2+).

This sequence belongs to the PyrI family. Contains catalytic and regulatory chains. The cofactor is Zn(2+).

Its function is as follows. Involved in allosteric regulation of aspartate carbamoyltransferase. The polypeptide is Aspartate carbamoyltransferase regulatory chain (Klebsiella pneumoniae subsp. pneumoniae (strain ATCC 700721 / MGH 78578)).